We begin with the raw amino-acid sequence, 192 residues long: Ribosome maturation factor RimP (192 aa).

It belongs to the RimP family.

The protein resides in the cytoplasm. Required for maturation of 30S ribosomal subunits. In Delftia acidovorans (strain DSM 14801 / SPH-1), this protein is Ribosome maturation factor RimP.